Consider the following 252-residue polypeptide: Hydroxyacylglutathione hydrolase (252 aa).

Zn(2+)-binding residues include His-54, His-56, Asp-58, His-59, His-111, Asp-128, and His-166.

The protein belongs to the metallo-beta-lactamase superfamily. Glyoxalase II family. As to quaternary structure, monomer. Zn(2+) serves as cofactor.

The enzyme catalyses an S-(2-hydroxyacyl)glutathione + H2O = a 2-hydroxy carboxylate + glutathione + H(+). The protein operates within secondary metabolite metabolism; methylglyoxal degradation; (R)-lactate from methylglyoxal: step 2/2. In terms of biological role, thiolesterase that catalyzes the hydrolysis of S-D-lactoyl-glutathione to form glutathione and D-lactic acid. The protein is Hydroxyacylglutathione hydrolase of Photobacterium profundum (strain SS9).